Here is a 415-residue protein sequence, read N- to C-terminus: Protein PIN-LIKES 4 (415 aa).

Residues 1 to 13 are Lumenal-facing; that stretch reads MKLLELFIASSKP. The chain crosses the membrane as a helical span at residues 14 to 34; sequence VVETLLITSVGFYLALDTVNL. The Cytoplasmic portion of the chain corresponds to 35-44; the sequence is LGHDARKHLN. The chain crosses the membrane as a helical span at residues 45-61; it reads NIVFYVFSPSLIGSRLA. Topologically, residues 62–75 are lumenal; that stretch reads DSVTYESLVKMWFM. The helical transmembrane segment at 76–96 threads the bilayer; sequence PVNVLLTFMIGSLLGWIVIVI. Residues 97 to 106 lie on the Cytoplasmic side of the membrane; that stretch reads TKPPSQLRGL. A helical membrane pass occupies residues 107-127; it reads IISCCASGNLGTMPLIIIPAI. Over 128–143 the chain is Lumenal; the sequence is CKEKGGPFGDSESCEK. A helical membrane pass occupies residues 144-161; sequence YGMGYVTLSMTAFFISVY. Residues 162 to 244 lie on the Cytoplasmic side of the membrane; the sequence is KHDTNWYVSG…RVVSLSKKVN (83 aa). A helical membrane pass occupies residues 245 to 265; that stretch reads LGSIFAPATIAAIIALVIGLI. Residues 266–285 lie on the Lumenal side of the membrane; sequence TPLRNLIIGTVAPFRVIQDS. A helical transmembrane segment spans residues 286–306; that stretch reads LTLLGDGAIPAMTLILGGNLL. The Cytoplasmic portion of the chain corresponds to 307 to 322; that stretch reads KGMRRSEVRSSEMKNS. A helical transmembrane segment spans residues 323 to 343; the sequence is CIIGVLVARYILLPVSGVLLV. At 344–355 the chain is on the lumenal side; that stretch reads RGAYKLDLVTSE. Residues 356-376 traverse the membrane as a helical segment; sequence PLYQFVLLLQYAVPPAMNLGT. Residues 377 to 389 are Cytoplasmic-facing; the sequence is KTQLFGAGESECS. The helical transmembrane segment at 390-410 threads the bilayer; the sequence is VIMLWTYSLAAVSLTVWPTFF. Over 411 to 415 the chain is Lumenal; it reads MWLVT.

The protein belongs to the auxin efflux carrier (TC 2.A.69.2) family. Expressed in seedlings, rosette and cauline leaves, stems, flowers and siliques.

The protein resides in the endoplasmic reticulum membrane. Its function is as follows. Involved in cellular auxin homeostasis by regulating auxin metabolism. Regulates intracellular auxin accumulation at the endoplasmic reticulum and thus auxin availability for nuclear auxin signaling. The protein is Protein PIN-LIKES 4 of Arabidopsis thaliana (Mouse-ear cress).